We begin with the raw amino-acid sequence, 298 residues long: Probable pyridoxal 5'-phosphate synthase subunit SNZ3 (298 aa).

Asp-21 is a D-ribose 5-phosphate binding site. The active-site Schiff-base intermediate with D-ribose 5-phosphate is Lys-78. Residues Gly-150, Gly-213, and 234–235 (GS) each bind D-ribose 5-phosphate.

The protein belongs to the PdxS/SNZ family. Homohexamer. Interacts with THI11.

The catalysed reaction is aldehydo-D-ribose 5-phosphate + D-glyceraldehyde 3-phosphate + L-glutamine = pyridoxal 5'-phosphate + L-glutamate + phosphate + 3 H2O + H(+). Its pathway is cofactor biosynthesis; pyridoxal 5'-phosphate biosynthesis. Its function is as follows. Catalyzes the formation of pyridoxal 5'-phosphate from ribose 5-phosphate (RBP), glyceraldehyde 3-phosphate (G3P) and ammonia. The ammonia is provided by a SNO isoform. Can also use ribulose 5-phosphate and dihydroxyacetone phosphate as substrates, resulting from enzyme-catalyzed isomerization of RBP and G3P, respectively. This Saccharomyces cerevisiae (strain ATCC 204508 / S288c) (Baker's yeast) protein is Probable pyridoxal 5'-phosphate synthase subunit SNZ3 (SNZ3).